Reading from the N-terminus, the 298-residue chain is Glycine--tRNA ligase alpha subunit (298 aa).

The protein belongs to the class-II aminoacyl-tRNA synthetase family. Tetramer of two alpha and two beta subunits.

It is found in the cytoplasm. The enzyme catalyses tRNA(Gly) + glycine + ATP = glycyl-tRNA(Gly) + AMP + diphosphate. The protein is Glycine--tRNA ligase alpha subunit of Neisseria meningitidis serogroup C / serotype 2a (strain ATCC 700532 / DSM 15464 / FAM18).